Reading from the N-terminus, the 41-residue chain is U-AITX-Bg1a (41 aa).

Cystine bridges form between Cys-2–Cys-35, Cys-4–Cys-28, and Cys-18–Cys-36.

This sequence belongs to the sea anemone type 3 (BDS) potassium channel toxin family.

The protein localises to the secreted. Its subcellular location is the nematocyst. Functionally, potently and selectively inhibits voltage-gated potassium channels Kv11/KCNH/ERG. Acts as a gating-modifier toxin that shifts the voltage-dependence of ERG activation in the positive direction and suppresses its current amplitudes elicited by strong depolarizing pulses that maximally activate the channels. This chain is U-AITX-Bg1a, found in Bunodosoma granuliferum (Red warty sea anemone).